A 293-amino-acid chain; its full sequence is Undecaprenyl-diphosphatase (293 aa).

7 helical membrane-spanning segments follow: residues 3–23 (IALAIKALILGIVEGLTEFLP), 43–63 (KGKIFEIVIQFGAILAVCWEF), 85–105 (LNVIVATIPAITLALIFGKAI), 109–129 (LFNPIVVASAFIIGGLVILWA), 203–223 (VATEFSFFLAIPVIFGATVYE), 238–258 (IFGIGFVAAFISAFFCVRWLL), and 269–289 (FAWYRIVFGVIVLVTAYTHLI).

This sequence belongs to the UppP family.

It is found in the cell inner membrane. It carries out the reaction di-trans,octa-cis-undecaprenyl diphosphate + H2O = di-trans,octa-cis-undecaprenyl phosphate + phosphate + H(+). Its function is as follows. Catalyzes the dephosphorylation of undecaprenyl diphosphate (UPP). Confers resistance to bacitracin. This is Undecaprenyl-diphosphatase from Ralstonia nicotianae (strain ATCC BAA-1114 / GMI1000) (Ralstonia solanacearum).